A 40-amino-acid chain; its full sequence is Photosystem II reaction center protein J (40 aa).

Residues 8-28 form a helical membrane-spanning segment; sequence IPLWIIGTVTGILVIGLIGIF.

This sequence belongs to the PsbJ family. PSII is composed of 1 copy each of membrane proteins PsbA, PsbB, PsbC, PsbD, PsbE, PsbF, PsbH, PsbI, PsbJ, PsbK, PsbL, PsbM, PsbT, PsbX, PsbY, PsbZ, Psb30/Ycf12, at least 3 peripheral proteins of the oxygen-evolving complex and a large number of cofactors. It forms dimeric complexes.

Its subcellular location is the plastid. The protein localises to the chloroplast thylakoid membrane. Its function is as follows. One of the components of the core complex of photosystem II (PSII). PSII is a light-driven water:plastoquinone oxidoreductase that uses light energy to abstract electrons from H(2)O, generating O(2) and a proton gradient subsequently used for ATP formation. It consists of a core antenna complex that captures photons, and an electron transfer chain that converts photonic excitation into a charge separation. The sequence is that of Photosystem II reaction center protein J from Eucalyptus globulus subsp. globulus (Tasmanian blue gum).